Reading from the N-terminus, the 669-residue chain is GTP-binding protein 1 (669 aa).

The segment at 1–32 (MATERSRSAMDSPVPASMFAPEPSSPGAARAA) is disordered. A phosphoserine mark is found at S6, S8, S12, S24, S25, S44, S47, and S69. Residues 158-389 (FLEVRVAVVG…LNLLSPRTSY (232 aa)) form the tr-type G domain. The tract at residues 167 to 174 (GNVDAGKS) is G1. 167 to 174 (GNVDAGKS) contributes to the GTP binding site. Residues 206-210 (GRTSS) form a G2 region. A G3 region spans residues 252-255 (DLAG). Residues 252–256 (DLAGH) and 308–311 (TKID) each bind GTP. The G4 stretch occupies residues 308 to 311 (TKID). Positions 366–368 (SNV) are G5. Residues 573 to 595 (LLQTTNNSPMNSKPQQIKMQSTK) are compositionally biased toward polar residues. The tract at residues 573–669 (LLQTTNNSPM…GACVTPASGC (97 aa)) is disordered. A Phosphoserine modification is found at S580. Over residues 646 to 657 (GRRRGGQRHKVK) the composition is skewed to basic residues.

Belongs to the TRAFAC class translation factor GTPase superfamily. Classic translation factor GTPase family. GTPBP1 subfamily. Interacts with EXOSC2/RRP4, EXOSC3/RRP40, EXOSC5/RRP46, HNRNPD, HNRNPR and SYNCRIP. Identified in a complex with AANAT mRNA, but does not bind mRNA by itself.

It localises to the cytoplasm. Its function is as follows. Promotes degradation of target mRNA species. Plays a role in the regulation of circadian mRNA stability. Binds GTP and has GTPase activity. The sequence is that of GTP-binding protein 1 (GTPBP1) from Homo sapiens (Human).